The sequence spans 352 residues: MSGNTFGALFTVTTFGESHGPAIGCVVDGCPPGMSLTEADIQPFLDKRKPGQSKYTTQRREEDKVQILSGVFDGKTTGAPIALLIQNTDQRSRDYEDIKNLFRPGHADFTYHYKYGHRDYRGGGRSSARETAARVAAGAIARLYLKRYLNLDIIGYLQQMGDLKLQFENENEINKNPFFCPNNKQTQELADYIDRLRRQGDSVGARVKILARGVPTGLGDPVFDKLDATLAYAMMSINAVKGVEIGAGFNAVEQLGSYHRDQMTAKGFLSNHAGGILGGIATGQPIEVSIALKPTSSITTPGQTINTEGEEVTVVTKGRHDPCVGIRAVPIAEAMMALVLMDHYLRHKAQCK.

Residue Arg-48 participates in NADP(+) binding. FMN-binding positions include 125–127 (RSS), 238–239 (NA), Gly-278, 293–297 (KPTSS), and Arg-319.

It belongs to the chorismate synthase family. In terms of assembly, homotetramer. Requires FMNH2 as cofactor.

It catalyses the reaction 5-O-(1-carboxyvinyl)-3-phosphoshikimate = chorismate + phosphate. The protein operates within metabolic intermediate biosynthesis; chorismate biosynthesis; chorismate from D-erythrose 4-phosphate and phosphoenolpyruvate: step 7/7. Functionally, catalyzes the anti-1,4-elimination of the C-3 phosphate and the C-6 proR hydrogen from 5-enolpyruvylshikimate-3-phosphate (EPSP) to yield chorismate, which is the branch point compound that serves as the starting substrate for the three terminal pathways of aromatic amino acid biosynthesis. This reaction introduces a second double bond into the aromatic ring system. This Legionella pneumophila (strain Paris) protein is Chorismate synthase.